A 433-amino-acid polypeptide reads, in one-letter code: MNNNIFSTTTTINDDYMLFPYNDHYSSQPLLPFSPSSSINDILIHSTSNTSNNHLDHHHQFQQPSPFSHFEFAPDCALLTSFHPENNGHDDNQTIPNDNHHPSLHFPLNNTIVEQPTEPSETINLIEDSQRISTSQDPKMKKAKKPSRTDRHSKIKTAKGTRDRRMRLSLDVAKELFGLQDMLGFDKASKTVEWLLTQAKPEIIKIATTLSHHGCFSSGDESHIRPVLGSMDTSSDLCELASMWTVDDRGSNTNTTETRGNKVDGRSMRGKRKRPEPRTPILKKLSKEERAKARERAKGRTMEKMMMKMKGRSQLVKVVEEDAHDHGEIIKNNNRSQVNRSSFEMTHCEDKIEELCKNDRFAVCNEFIMNKKDHISNESYDLVNYKPNSSFPVINHHRSQGAANSIEQHQFTDLHYSFGAKPRDLMHNYQNMY.

Disordered regions lie at residues Gln130–Asp163 and Asp247–Ile281. The TCP domain maps to Arg148 to Ile206. One can recognise a R domain in the interval Lys287 to Lys304.

In terms of tissue distribution, expressed in unelongated axillary buds, and, to a lower extent, in axillary structures such as flowers and siliques.

It localises to the nucleus. Transcription factor that prevents axillary bud outgrowth and delays early axillary bud development. Indirectly required for the auxin-induced control of apical dominance. This is Transcription factor TCP18 from Arabidopsis thaliana (Mouse-ear cress).